We begin with the raw amino-acid sequence, 334 residues long: Cytochrome c biogenesis protein CcsA (334 aa).

8 helical membrane-spanning segments follow: residues 12-32 (NTAFLVLLLTMFAYWVAVVFP), 35-55 (WLVQGASGAMAIANLTITALL), 67-87 (ISNLYESLFFLAWGITAVHFI), 96-116 (FVGAVTSPIALGIVAFAALTL), 141-161 (VMMVSYATLMVGSLLAIAFLF), 242-262 (IIGLGFPLLTIGIIAGAVWAN), 277-297 (WALITWLVFAAYLHARITKGW), and 303-323 (AILAASGFTVVWICYLGVNLL).

It belongs to the CcmF/CycK/Ccl1/NrfE/CcsA family. In terms of assembly, may interact with ccs1.

The protein localises to the cellular thylakoid membrane. Required during biogenesis of c-type cytochromes (cytochrome c6 and cytochrome f) at the step of heme attachment. The chain is Cytochrome c biogenesis protein CcsA from Synechocystis sp. (strain ATCC 27184 / PCC 6803 / Kazusa).